A 286-amino-acid chain; its full sequence is Pantothenate synthetase (286 aa).

ATP is bound at residue 31-38 (MGALHDGH). His-38 serves as the catalytic Proton donor. Gln-62 is a binding site for (R)-pantoate. Residue Gln-62 participates in beta-alanine binding. ATP is bound at residue 148–151 (GKKD). Gln-154 serves as a coordination point for (R)-pantoate. ATP is bound by residues Val-177 and 185–188 (KSSR).

The protein belongs to the pantothenate synthetase family. As to quaternary structure, homodimer.

It is found in the cytoplasm. It carries out the reaction (R)-pantoate + beta-alanine + ATP = (R)-pantothenate + AMP + diphosphate + H(+). The protein operates within cofactor biosynthesis; (R)-pantothenate biosynthesis; (R)-pantothenate from (R)-pantoate and beta-alanine: step 1/1. Its function is as follows. Catalyzes the condensation of pantoate with beta-alanine in an ATP-dependent reaction via a pantoyl-adenylate intermediate. The protein is Pantothenate synthetase of Staphylococcus carnosus (strain TM300).